The sequence spans 287 residues: RxLR effector protein Avr4 (287 aa).

Positions 1 to 24 are cleaved as a signal peptide; sequence MRSLHILLVFTASLLASLTESAKA. The short motif at 42–55 is the RxLR-dEER element; it reads RFLRAQTDEKNEER. The W1 motif stretch occupies residues 115-138; that stretch reads KYERMQWQKLKEGETLTFMRLGDR. The segment at 148–171 is W2 motif; it reads QLLRWVAQKKPVESVYDDLQVAGF. The tract at residues 221-244 is W3 motif; the sequence is LFEKWAMEGTHIKSVITTLKLNGK. Positions 246–267 are y motif; sequence ASEMANNENFPALLKYVKLYLD.

This sequence belongs to the RxLR effector family.

Its subcellular location is the secreted. The protein localises to the host cytoplasm. The protein resides in the host nucleus. It localises to the host nucleolus. It is found in the host cytoskeleton. Functionally, secreted effector that acts as an elicitor of hypersensitive response (HR) specifically on plants carrying defense protein R4, through its interaction with this protein. The protein is RxLR effector protein Avr4 of Phytophthora infestans (strain T30-4) (Potato late blight agent).